Reading from the N-terminus, the 390-residue chain is MGIVLKRAIAAGMKPFPNSTWHWSRTIRPFSQHLSSTCFLQQSSRFTSKRYLHLSTLTQQEKRFLPESELAKYKEYYQGLKSTVNEIPESVASKSPSLRTLHKRLQLPNELTYSTLSRCLTCPSAKLPDKINNPTKGAAFVNTVPTNKYLDNHGLNIMGKNLLSYHVTKSIIQKYPRLPTVVLNAAVNAYISEAVLAHIAKYWGIEVETTSVLSRYLKMEPFEFTLGRLKFFNNSLNSKDGIELITGKNFSETSALAMSVRSIIAAIWAVTEQKDSQAVYRFIDDHIMSRKLDITKMFQFEQPTRELAMLCRREGLEKPVSKLVAESGRLSKSPVFIVHVFSGEETLGEGYGSSLKEAKARAATDALMKWYCYEPLAQQEPVIDPGTVVV.

A mitochondrion-targeting transit peptide spans 1-59 (MGIVLKRAIAAGMKPFPNSTWHWSRTIRPFSQHLSSTCFLQQSSRFTSKRYLHLSTLTQ). Residues 139-205 (AFVNTVPTNK…LAHIAKYWGI (67 aa)) enclose the RNase III domain. A DRBM domain is found at 302–372 (QPTRELAMLC…ATDALMKWYC (71 aa)).

Belongs to the ribonuclease III family. Mitochondrion-specific ribosomal protein mL44 subfamily. In terms of assembly, component of the mitochondrial large ribosomal subunit (mt-LSU). Mature yeast 74S mitochondrial ribosomes consist of a small (37S) and a large (54S) subunit. The 37S small subunit contains a 15S ribosomal RNA (15S mt-rRNA) and 34 different proteins. The 54S large subunit contains a 21S rRNA (21S mt-rRNA) and 46 different proteins. mL44 forms a heterodimer with mL57 and stabilizes rRNA expansion segments 1/2 at a membrane-facing protuberance close to the point of attachment of the ribosome to the translocon in the membrane.

Its subcellular location is the mitochondrion. Component of the mitochondrial ribosome (mitoribosome), a dedicated translation machinery responsible for the synthesis of mitochondrial genome-encoded proteins, including at least some of the essential transmembrane subunits of the mitochondrial respiratory chain. The mitoribosomes are attached to the mitochondrial inner membrane and translation products are cotranslationally integrated into the membrane. The protein is Large ribosomal subunit protein mL44 (MRPL3) of Saccharomyces cerevisiae (strain ATCC 204508 / S288c) (Baker's yeast).